A 368-amino-acid polypeptide reads, in one-letter code: N-acetylneuraminate epimerase (368 aa).

Residues 1-19 (MNKTIMALAIMMASFAANA) form the signal peptide. 7 Kelch repeats span residues 40 to 84 (TVYI…AFID), 86 to 137 (NLYV…FVHN), 139 to 173 (KAYV…KINA), 174 to 219 (HYFD…VNKG), 222 to 265 (TWLI…VAGG), 287 to 336 (ENYQ…PWNN), and 338 to 367 (LLII…VTVQ). Glu-228 functions as the Proton acceptor in the catalytic mechanism.

This sequence belongs to the NanM family. As to quaternary structure, homodimer.

It is found in the periplasm. It catalyses the reaction N-acetyl-alpha-neuraminate = N-acetyl-beta-neuraminate. Its function is as follows. Converts alpha-N-acetylneuranimic acid (Neu5Ac) to the beta-anomer, accelerating the equilibrium between the alpha- and beta-anomers. Probably facilitates sialidase-negative bacteria to compete successfully for limited amounts of extracellular Neu5Ac, which is likely taken up in the beta-anomer. In addition, the rapid removal of sialic acid from solution might be advantageous to the bacterium to damp down host responses. The chain is N-acetylneuraminate epimerase from Shigella flexneri serotype 5b (strain 8401).